A 243-amino-acid chain; its full sequence is tRNA (guanine-N(7)-)-methyltransferase (243 aa).

S-adenosyl-L-methionine is bound by residues glutamate 74, glutamate 99, aspartate 126, and aspartate 149. Residue aspartate 149 is part of the active site. Residues lysine 153, aspartate 185, and 221 to 224 (TKFE) each bind substrate.

The protein belongs to the class I-like SAM-binding methyltransferase superfamily. TrmB family.

The enzyme catalyses guanosine(46) in tRNA + S-adenosyl-L-methionine = N(7)-methylguanosine(46) in tRNA + S-adenosyl-L-homocysteine. The protein operates within tRNA modification; N(7)-methylguanine-tRNA biosynthesis. Functionally, catalyzes the formation of N(7)-methylguanine at position 46 (m7G46) in tRNA. The sequence is that of tRNA (guanine-N(7)-)-methyltransferase from Psychromonas ingrahamii (strain DSM 17664 / CCUG 51855 / 37).